A 376-amino-acid chain; its full sequence is Dihydroorotate dehydrogenase (quinone) (376 aa).

FMN-binding positions include 74 to 78 (AGFDK) and Thr-98. Lys-78 provides a ligand contact to substrate. 123–127 (NHMGF) is a binding site for substrate. Residues Asn-152 and Asn-185 each contribute to the FMN site. Asn-185 provides a ligand contact to substrate. Ser-188 serves as the catalytic Nucleophile. Asn-190 contacts substrate. FMN-binding residues include Lys-223 and Thr-251. Residue 252-253 (NT) coordinates substrate. Residues Gly-280, Gly-309, and 330 to 331 (YT) each bind FMN. The segment at 352–376 (RNPAPSSPERMPTGIQSGRKIVMDP) is disordered.

The protein belongs to the dihydroorotate dehydrogenase family. Type 2 subfamily. In terms of assembly, monomer. FMN is required as a cofactor.

It localises to the cell membrane. It catalyses the reaction (S)-dihydroorotate + a quinone = orotate + a quinol. It participates in pyrimidine metabolism; UMP biosynthesis via de novo pathway; orotate from (S)-dihydroorotate (quinone route): step 1/1. Catalyzes the conversion of dihydroorotate to orotate with quinone as electron acceptor. This chain is Dihydroorotate dehydrogenase (quinone), found in Synechococcus sp. (strain JA-3-3Ab) (Cyanobacteria bacterium Yellowstone A-Prime).